The primary structure comprises 296 residues: Aldo-keto reductase MYCFIDRAFT_156381 (296 aa).

Asp-14 provides a ligand contact to NADP(+). The Proton donor role is filled by Tyr-19. His-83 serves as a coordination point for substrate. Residues 113–114, Gln-139, 168–178, and Arg-191 contribute to the NADP(+) site; these read CN and SPLAGGMLTDR. A substrate-binding site is contributed by Tyr-201. Position 255-263 (255-263) interacts with NADP(+); the sequence is SSAEQLESN.

Belongs to the aldo/keto reductase family. Aldo/keto reductase 2 subfamily.

It functions in the pathway secondary metabolite biosynthesis. Its function is as follows. Aldo-keto reductase; part of the gene cluster that mediates the biosynthesis of an emodin derivative that may be involved in black Sigatoka disease of banana. The pathway begins with the synthesis of atrochrysone thioester by the polyketide synthase PKS8-1. The atrochrysone carboxyl ACP thioesterase MYCFIDRAFT_190111 then breaks the thioester bond and releases the atrochrysone carboxylic acid from PKS8-1. The decarboxylase MYCFIDRAFT_34057 then catalyzes the concerted decarboxylation-elimination required to convert atochrysone carboxylic acid into emodin anthrone, which is further oxidized to emodin by the anthrone oxygenase MYCFIDRAFT_34418. The functions of the other tailoring enzymes as well as the final product of the cluster have still to be identified. This chain is Aldo-keto reductase MYCFIDRAFT_156381, found in Pseudocercospora fijiensis (strain CIRAD86) (Black leaf streak disease fungus).